The chain runs to 393 residues: Pinosylvin synthase (393 aa).

A substrate-binding site is contributed by 57 to 60 (KFKR). Cys167 is a catalytic residue. Substrate-binding positions include Leu270 and 308–310 (GGR).

The protein belongs to the thiolase-like superfamily. Chalcone/stilbene synthases family. Homodimer.

The protein resides in the cytoplasm. The enzyme catalyses (E)-cinnamoyl-CoA + 3 malonyl-CoA + 3 H(+) = (E)-pinosylvin + 4 CO2 + 4 CoA. It catalyses the reaction 3-phenylpropanoyl-CoA + 3 malonyl-CoA + 3 H(+) = dihydropinosylvin + 4 CO2 + 4 CoA. The protein operates within phytoalexin biosynthesis; hydropinosylvin biosynthesis. Its function is as follows. Catalyzes the production of pinosylvin from cinnamoyl-CoA and malonyl-CoA, and dihydropinosylvin from dihydrocinnamoyl-CoA. The polypeptide is Pinosylvin synthase (Pinus sylvestris (Scotch pine)).